A 400-amino-acid polypeptide reads, in one-letter code: tRNA(Met) cytidine acetate ligase (400 aa).

Residues 7 to 20, Gly-101, Asn-162, and Arg-187 each bind ATP; that span reads IVEY…HQYH.

Belongs to the TmcAL family.

It localises to the cytoplasm. The enzyme catalyses cytidine(34) in elongator tRNA(Met) + acetate + ATP = N(4)-acetylcytidine(34) in elongator tRNA(Met) + AMP + diphosphate. Catalyzes the formation of N(4)-acetylcytidine (ac(4)C) at the wobble position of elongator tRNA(Met), using acetate and ATP as substrates. First activates an acetate ion to form acetyladenylate (Ac-AMP) and then transfers the acetyl group to tRNA to form ac(4)C34. The protein is tRNA(Met) cytidine acetate ligase of Oceanobacillus iheyensis (strain DSM 14371 / CIP 107618 / JCM 11309 / KCTC 3954 / HTE831).